We begin with the raw amino-acid sequence, 486 residues long: MAIAEWRQQLKLGEVSARELIDHQLARIAVVDPTLHAFLDVTAERARADADRIDEALAAGESLPPLAGVPLAIKDNLCTKGIRTTCSSRMLETFVPPYESTVTERLWQAGAVLLGKTNLDEFAMGSSTETSAFGATSNPWDISRVPGGSSGGSAAAVAAGECMAALGSDTGGSIRQPASFCGVVGLKPTYGRVSRWGLVAFASSLDQVGPFTTNVADAAELLQVIAGSDPRDSTCLNVAVPDYCSALSQPMSGVRIGLIRECFDQNGLDAQVKSTVLEAAEKLQSLGAELVEVSCPRFSDGIATYYVIAPSEASANLARYDGVKYGYRAEGADALAAMTARSRAEGFGSEVQRRILIGTYALSAGYMDAYYKKAQQVRTLIRQDFDAAFQTVDVLLTPTSPTTAFQVGAHADDPLAMYLADLLTIPANLAGLPAISLPCGFDDDGLPIGVQLIANVLEESRLLQVAFHYEQSANVMTNHPQGNFIP.

Active-site charge relay system residues include Lys74 and Ser149. The active-site Acyl-ester intermediate is Ser173.

It belongs to the amidase family. GatA subfamily. In terms of assembly, heterotrimer of A, B and C subunits.

It carries out the reaction L-glutamyl-tRNA(Gln) + L-glutamine + ATP + H2O = L-glutaminyl-tRNA(Gln) + L-glutamate + ADP + phosphate + H(+). Functionally, allows the formation of correctly charged Gln-tRNA(Gln) through the transamidation of misacylated Glu-tRNA(Gln) in organisms which lack glutaminyl-tRNA synthetase. The reaction takes place in the presence of glutamine and ATP through an activated gamma-phospho-Glu-tRNA(Gln). This is Glutamyl-tRNA(Gln) amidotransferase subunit A from Prochlorococcus marinus (strain MIT 9303).